Reading from the N-terminus, the 362-residue chain is NAD(P)H-quinone oxidoreductase subunit 1, chloroplastic (362 aa).

The next 8 membrane-spanning stretches (helical) occupy residues 27–47 (IWIL…LVIV), 94–114 (IPLF…SFLV), 128–148 (IGVF…LMAG), 164–184 (AAQS…ISLL), 202–222 (FFGW…ISSL), 247–267 (YSGI…LVSS), 303–323 (TMSI…SITI), and 335–355 (LLNL…LLTT).

This sequence belongs to the complex I subunit 1 family. In terms of assembly, NDH is composed of at least 16 different subunits, 5 of which are encoded in the nucleus.

The protein localises to the plastid. It is found in the chloroplast thylakoid membrane. It carries out the reaction a plastoquinone + NADH + (n+1) H(+)(in) = a plastoquinol + NAD(+) + n H(+)(out). It catalyses the reaction a plastoquinone + NADPH + (n+1) H(+)(in) = a plastoquinol + NADP(+) + n H(+)(out). Functionally, NDH shuttles electrons from NAD(P)H:plastoquinone, via FMN and iron-sulfur (Fe-S) centers, to quinones in the photosynthetic chain and possibly in a chloroplast respiratory chain. The immediate electron acceptor for the enzyme in this species is believed to be plastoquinone. Couples the redox reaction to proton translocation, and thus conserves the redox energy in a proton gradient. The polypeptide is NAD(P)H-quinone oxidoreductase subunit 1, chloroplastic (ndhA) (Oryza sativa (Rice)).